Consider the following 394-residue polypeptide: Elongation factor Tu 2 (394 aa).

In terms of domain architecture, tr-type G spans 9–204 (KPHCNIGTIG…SIDDYIPQPT (196 aa)). The tract at residues 18–25 (GHVDHGKT) is G1. GTP is bound at residue 18-25 (GHVDHGKT). A Mg(2+)-binding site is contributed by Thr25. Residues 61–65 (GITIQ) form a G2 region. Residues 82-85 (DCPG) form a G3 region. GTP-binding positions include 82–86 (DCPGH) and 137–140 (NKID). The tract at residues 137–140 (NKID) is G4. A G5 region spans residues 174 to 176 (SAL).

It belongs to the TRAFAC class translation factor GTPase superfamily. Classic translation factor GTPase family. EF-Tu/EF-1A subfamily. Monomer.

The protein resides in the cytoplasm. It catalyses the reaction GTP + H2O = GDP + phosphate + H(+). In terms of biological role, GTP hydrolase that promotes the GTP-dependent binding of aminoacyl-tRNA to the A-site of ribosomes during protein biosynthesis. The polypeptide is Elongation factor Tu 2 (Orientia tsutsugamushi (strain Boryong) (Rickettsia tsutsugamushi)).